The primary structure comprises 416 residues: Gamma-glutamyl phosphate reductase (416 aa).

Belongs to the gamma-glutamyl phosphate reductase family.

The protein localises to the cytoplasm. It catalyses the reaction L-glutamate 5-semialdehyde + phosphate + NADP(+) = L-glutamyl 5-phosphate + NADPH + H(+). It participates in amino-acid biosynthesis; L-proline biosynthesis; L-glutamate 5-semialdehyde from L-glutamate: step 2/2. Catalyzes the NADPH-dependent reduction of L-glutamate 5-phosphate into L-glutamate 5-semialdehyde and phosphate. The product spontaneously undergoes cyclization to form 1-pyrroline-5-carboxylate. This chain is Gamma-glutamyl phosphate reductase, found in Streptococcus thermophilus (strain ATCC BAA-491 / LMD-9).